The following is a 147-amino-acid chain: Lysozyme C, intestinal isozyme (147 aa).

An N-terminal signal peptide occupies residues 1–18 (MKAVLILGLLLLSVTVQG). One can recognise a C-type lysozyme domain in the interval 19–147 (KKFEKCELAR…VSSYIRGCKL (129 aa)). Intrachain disulfides connect cysteine 24/cysteine 145, cysteine 48/cysteine 133, cysteine 83/cysteine 99, and cysteine 95/cysteine 113. Residues glutamate 53 and aspartate 71 contribute to the active site.

Belongs to the glycosyl hydrolase 22 family.

It carries out the reaction Hydrolysis of (1-&gt;4)-beta-linkages between N-acetylmuramic acid and N-acetyl-D-glucosamine residues in a peptidoglycan and between N-acetyl-D-glucosamine residues in chitodextrins.. In terms of biological role, lysozymes have primarily a bacteriolytic function; those in tissues and body fluids are associated with the monocyte-macrophage system and enhance the activity of immunoagents. In Bos taurus (Bovine), this protein is Lysozyme C, intestinal isozyme.